Reading from the N-terminus, the 291-residue chain is Zinc transporter ZupT (291 aa).

Helical transmembrane passes span 8 to 28 (IFIA…GSII), 39 to 59 (VLSL…FMEI), 74 to 94 (HWAE…SLLI), 147 to 167 (GIFT…ATFI), 174 to 194 (TLGI…GLAV), 209 to 229 (FIYS…GALI), 233 to 253 (FIGD…MVFI), and 271 to 291 (SLYG…LLGQ). Residues Asn158 and Glu161 each coordinate Fe(2+). Glu161 and His186 together coordinate Zn(2+). Positions 187, 190, and 219 each coordinate Fe(2+). Position 190 (Glu190) interacts with Zn(2+).

It belongs to the ZIP transporter (TC 2.A.5) family. ZupT subfamily.

Its subcellular location is the cell inner membrane. It carries out the reaction Zn(2+)(in) = Zn(2+)(out). Functionally, mediates zinc uptake. May also transport other divalent cations. The protein is Zinc transporter ZupT of Campylobacter jejuni subsp. jejuni serotype O:2 (strain ATCC 700819 / NCTC 11168).